The chain runs to 65 residues: Large ribosomal subunit protein uL29 (65 aa).

It belongs to the universal ribosomal protein uL29 family.

This is Large ribosomal subunit protein uL29 from Lactobacillus delbrueckii subsp. bulgaricus (strain ATCC 11842 / DSM 20081 / BCRC 10696 / JCM 1002 / NBRC 13953 / NCIMB 11778 / NCTC 12712 / WDCM 00102 / Lb 14).